The primary structure comprises 264 residues: uncharacterized protein (264 aa).

Polar residues-rich tracts occupy residues 1 to 18 (MFENLNTALTPKLQSSRS), 73 to 83 (SLGSVGTTEVN), and 126 to 139 (KTTQDMLISSQPVL). Disordered regions lie at residues 1–47 (MFEN…WVGS) and 68–264 (RKEP…LSFE). Low complexity predominate over residues 149–171 (SSGQPQVSSSAQPSPADASQPEA). The span at 194–212 (LIHKDGQDDPKLKVTECRR) shows a compositional bias: basic and acidic residues. A phosphoserine mark is found at Ser214, Ser215, Ser241, and Ser250.

This is an uncharacterized protein from Bos taurus (Bovine).